Reading from the N-terminus, the 706-residue chain is Maternal embryonic leucine zipper kinase (706 aa).

The 255-residue stretch at 11–265 folds into the Protein kinase domain; sequence YAVHDELGSG…VKKLLEHDWL (255 aa). Residues 17–25 and Lys40 each bind ATP; that span reads LGSGGFGKV. Asp132 functions as the Proton acceptor in the catalytic mechanism. Disordered stretches follow at residues 366-386, 433-493, and 506-555; these read LDKSGLEDDDSDPSSISSSSD, FTGR…SRGP, and SVYT…IGSA. Polar residues-rich tracts occupy residues 447–461 and 506–515; these read SVRSSDSASLGSAAT and SVYTTPNTRP. In terms of domain architecture, KA1 spans 656–705; it reads QETVHGWMTVELEIVRLQMFDKVGIRRKRLKGDAFMYKKVCEKILQMAKI.

The protein belongs to the protein kinase superfamily. CAMK Ser/Thr protein kinase family. SNF1 subfamily. Post-translationally, may be phosphorylated at Thr-169 by par-4 and/or autophosphorylated which likely results in its activation. Phosphorylation is not required for co-localization with the centrosome.

It localises to the cytoplasm. Its subcellular location is the cytoskeleton. The protein resides in the microtubule organizing center. The protein localises to the centrosome. The enzyme catalyses L-seryl-[protein] + ATP = O-phospho-L-seryl-[protein] + ADP + H(+). The catalysed reaction is L-threonyl-[protein] + ATP = O-phospho-L-threonyl-[protein] + ADP + H(+). Its function is as follows. Serine/threonine-protein kinase involved in cell autonomous neuroblast asymmetric divisions that generate one precursor cell and one apoptotic cell by controlling spindle positioning, myosin distribution and the segregation of cell fate determinants. Plays a role in neural fate specification in several dopaminergic linages, acting in concert with ham-1. Involved in phosphorylation of multiple proteins associated with key developmental processes, including the cell cycle, apoptosis, endocytosis, and asymmetric cell division. Promotes cell shedding during embryogenesis, probably through the endocytosis-mediated removal of cell adhesion molecules such as hmp-1 from the cell surface. May act downstream of par-4/strd-1/mop-25 to regulate cell shedding. The polypeptide is Maternal embryonic leucine zipper kinase (Caenorhabditis elegans).